The following is a 230-amino-acid chain: uncharacterized protein (230 aa).

The 229-residue stretch at 2 to 230 folds into the ABC transporter domain; it reads IQLSNVRKSY…ASSGQRSVGE (229 aa). ATP is bound at residue 38–45; the sequence is GPSGSGKS.

The protein belongs to the ABC transporter superfamily. In terms of assembly, part of a complex composed of YknX, YknY and YknZ. The complex interacts with YknW.

Its subcellular location is the cell membrane. In terms of biological role, part of an unusual four-component transporter, which is required for protection against the killing factor SdpC (sporulation-delaying protein). This is an uncharacterized protein from Bacillus subtilis (strain 168).